A 262-amino-acid chain; its full sequence is Methylthioribulose-1-phosphate dehydratase (262 aa).

Cys115 contributes to the substrate binding site. Positions 133 and 135 each coordinate Zn(2+). Glu158 acts as the Proton donor/acceptor in catalysis. His223 is a binding site for Zn(2+).

The protein belongs to the aldolase class II family. MtnB subfamily. Requires Zn(2+) as cofactor.

The protein localises to the cytoplasm. The catalysed reaction is 5-(methylsulfanyl)-D-ribulose 1-phosphate = 5-methylsulfanyl-2,3-dioxopentyl phosphate + H2O. Its pathway is amino-acid biosynthesis; L-methionine biosynthesis via salvage pathway; L-methionine from S-methyl-5-thio-alpha-D-ribose 1-phosphate: step 2/6. Its function is as follows. Catalyzes the dehydration of methylthioribulose-1-phosphate (MTRu-1-P) into 2,3-diketo-5-methylthiopentyl-1-phosphate (DK-MTP-1-P). This chain is Methylthioribulose-1-phosphate dehydratase, found in Meyerozyma guilliermondii (strain ATCC 6260 / CBS 566 / DSM 6381 / JCM 1539 / NBRC 10279 / NRRL Y-324) (Yeast).